A 114-amino-acid polypeptide reads, in one-letter code: Large ribosomal subunit protein bL19 (114 aa).

It belongs to the bacterial ribosomal protein bL19 family.

In terms of biological role, this protein is located at the 30S-50S ribosomal subunit interface and may play a role in the structure and function of the aminoacyl-tRNA binding site. The protein is Large ribosomal subunit protein bL19 of Acidithiobacillus ferrooxidans (strain ATCC 23270 / DSM 14882 / CIP 104768 / NCIMB 8455) (Ferrobacillus ferrooxidans (strain ATCC 23270)).